A 297-amino-acid polypeptide reads, in one-letter code: 1D-myo-inositol 2-acetamido-2-deoxy-alpha-D-glucopyranoside deacetylase (297 aa).

Zn(2+)-binding residues include His-11, Asp-14, and His-154.

Belongs to the MshB deacetylase family. Zn(2+) serves as cofactor.

The catalysed reaction is 1D-myo-inositol 2-acetamido-2-deoxy-alpha-D-glucopyranoside + H2O = 1D-myo-inositol 2-amino-2-deoxy-alpha-D-glucopyranoside + acetate. Functionally, catalyzes the deacetylation of 1D-myo-inositol 2-acetamido-2-deoxy-alpha-D-glucopyranoside (GlcNAc-Ins) in the mycothiol biosynthesis pathway. The polypeptide is 1D-myo-inositol 2-acetamido-2-deoxy-alpha-D-glucopyranoside deacetylase (Tsukamurella paurometabola (strain ATCC 8368 / DSM 20162 / CCUG 35730 / CIP 100753 / JCM 10117 / KCTC 9821 / NBRC 16120 / NCIMB 702349 / NCTC 13040) (Corynebacterium paurometabolum)).